The chain runs to 149 residues: Large ribosomal subunit protein uL13 (149 aa).

It belongs to the universal ribosomal protein uL13 family. In terms of assembly, part of the 50S ribosomal subunit.

Its function is as follows. This protein is one of the early assembly proteins of the 50S ribosomal subunit, although it is not seen to bind rRNA by itself. It is important during the early stages of 50S assembly. The sequence is that of Large ribosomal subunit protein uL13 from Chlorobium phaeobacteroides (strain DSM 266 / SMG 266 / 2430).